The primary structure comprises 234 residues: MLIRNYRGLLGTKLGMTQVWDANNRVVPVTVIKAGPNVVTQVKTPDSDGYSAVQLGYGEIDPRKINKPARGHFATSGVTPRRHLVELRTADAGNYRPGQELTGEVFAEGTVVDVTGTSKGKGFAGVMKRHGFKGLGAGHGVERKHRSPGSVGGCATPGRVFKGLRMAGRMGHARTTTPGLTIHAVDTERGFLLVKGAIPGPDGGLVFVRSAAKRPAPEAIAPAATVGAGEEVSA.

The segment at alanine 137–threonine 156 is disordered.

This sequence belongs to the universal ribosomal protein uL3 family. As to quaternary structure, part of the 50S ribosomal subunit. Forms a cluster with proteins L14 and L19.

Its function is as follows. One of the primary rRNA binding proteins, it binds directly near the 3'-end of the 23S rRNA, where it nucleates assembly of the 50S subunit. This Frankia alni (strain DSM 45986 / CECT 9034 / ACN14a) protein is Large ribosomal subunit protein uL3.